Consider the following 457-residue polypeptide: tRNA-2-methylthio-N(6)-dimethylallyladenosine synthase (457 aa).

An MTTase N-terminal domain is found at 3-120; it reads KKVYVKTFGC…LPQMIDKRRE (118 aa). Cys-12, Cys-49, Cys-83, Cys-157, Cys-161, and Cys-164 together coordinate [4Fe-4S] cluster. Residues 143 to 377 form the Radical SAM core domain; sequence RVDGPSAFVS…QATIEENVQR (235 aa). Residues 380–447 form the TRAM domain; that stretch reads DSMVGKIERI…PHSLRGELVL (68 aa).

Belongs to the methylthiotransferase family. MiaB subfamily. As to quaternary structure, monomer. [4Fe-4S] cluster serves as cofactor.

The protein localises to the cytoplasm. It carries out the reaction N(6)-dimethylallyladenosine(37) in tRNA + (sulfur carrier)-SH + AH2 + 2 S-adenosyl-L-methionine = 2-methylsulfanyl-N(6)-dimethylallyladenosine(37) in tRNA + (sulfur carrier)-H + 5'-deoxyadenosine + L-methionine + A + S-adenosyl-L-homocysteine + 2 H(+). Its function is as follows. Catalyzes the methylthiolation of N6-(dimethylallyl)adenosine (i(6)A), leading to the formation of 2-methylthio-N6-(dimethylallyl)adenosine (ms(2)i(6)A) at position 37 in tRNAs that read codons beginning with uridine. This is tRNA-2-methylthio-N(6)-dimethylallyladenosine synthase from Paraburkholderia xenovorans (strain LB400).